The chain runs to 249 residues: Ciliogenesis and planar polarity effector 2 (249 aa).

The small GTPase-like stretch occupies residues 46–249; the sequence is PADVAAYKVF…VIAGLVGGAE (204 aa). GTP is bound by residues 58-65 and 171-174; these read GKSGVGKT and TKLD.

This sequence belongs to the small GTPase superfamily. Rab family. In terms of assembly, interacts with fuz.

The protein resides in the cytoplasm. The protein localises to the cytoskeleton. It localises to the cilium basal body. Its function is as follows. Potential effector of the planar cell polarity signaling pathway. Plays a role in targeted membrane trafficking most probably at the level of vesicle fusion with membranes. Involved in cilium biogenesis by regulating the transport of cargo proteins to the basal body and to the apical tips of cilia. More generally involved in exocytosis in secretory cells. This chain is Ciliogenesis and planar polarity effector 2, found in Xenopus laevis (African clawed frog).